Consider the following 417-residue polypeptide: Maltodextrin-binding protein MdxE (417 aa).

An N-terminal signal peptide occupies residues methionine 1–alanine 22. The N-palmitoyl cysteine moiety is linked to residue cysteine 23. Cysteine 23 carries S-diacylglycerol cysteine lipidation.

It belongs to the bacterial solute-binding protein 1 family. As to quaternary structure, the complex is composed of two ATP-binding proteins (MsmX), two transmembrane proteins (MdxF and MdxG) and a solute-binding protein (MdxE).

The protein localises to the cell membrane. Inhibited by glucose and lactose. Functionally, part of the ABC transporter complex involved in maltodextrin import. Binds maltodextrin. Can also bind maltose with low affinity, but is not involved in its uptake. In Bacillus subtilis (strain 168), this protein is Maltodextrin-binding protein MdxE (mdxE).